Here is a 993-residue protein sequence, read N- to C-terminus: General transcription factor II-I repeat domain-containing protein 1 (993 aa).

GTF2I-like repeat units follow at residues 117-211 and 332-426; these read LGPT…EPKS and LRET…DGTT. The interval 461 to 480 is disordered; that stretch reads GSRSEKSSISDECEPGTSSE. GTF2I-like repeat units lie at residues 597–691, 727–821, and 824–918; these read DGIG…LEDC, LSRI…RPDD, and ANRL…ICSE. Residues 916–961 form a disordered region; the sequence is CSEPPKIKNGNTGPKRKRKRVSEGNSISSASSNCSSSSSSSSNMDP. The Nuclear localization signal signature appears at 929 to 936; the sequence is PKRKRKRV. A compositionally biased stretch (low complexity) spans 938–961; sequence EGNSISSASSNCSSSSSSSSNMDP.

This sequence belongs to the TFII-I family. Interacts (via repeats 4-5) with foxh1/fast1 (via Fork-head domain). Interacts with smad2 and smad3 (via MH1 domain) in a ligand (activin)-dependent manner. Interacts with pou5f1.1/oct-25 to form a repression complex on the promoters of the gsc and mix2 genes. Uniformly expressed in the embryo in pre- and early gastrula stages. Enriched in the head region of early neurula through tailbud stages.

It is found in the nucleus. Its function is as follows. Transcription factor that activates a subset of organizer-specific genes. Binds to the distal element (DE) of the gsc promoter to regulate its expression. In the presence of pou5f1.1/oct-25, forms a repression complex on the promoter of the gsc and mix2 genes to inhibit their transcription. The chain is General transcription factor II-I repeat domain-containing protein 1 (gtf2ird1) from Xenopus laevis (African clawed frog).